We begin with the raw amino-acid sequence, 150 residues long: Transcription antitermination protein NusB (150 aa).

It belongs to the NusB family.

Its function is as follows. Involved in transcription antitermination. Required for transcription of ribosomal RNA (rRNA) genes. Binds specifically to the boxA antiterminator sequence of the ribosomal RNA (rrn) operons. This Saccharophagus degradans (strain 2-40 / ATCC 43961 / DSM 17024) protein is Transcription antitermination protein NusB.